We begin with the raw amino-acid sequence, 290 residues long: MSEKLQKVLARAGHGSRREIESIIEAGRVSVDGKIAKLGDRVEVTPGLKIRIDGHLISVRESAEQICRVLAYYKPEGELCTRNDPEGRPTVFDRLPKLRGARWIAVGRLDVNTCGLLLFTTDGELANRLMHPSREVEREYAVRVFGQVDDAKLRDLSRGVQLEDGPAAFKTIKFSGGEGINQWYNVTLTEGRNREVRRLWEAVGVQVSRLIRVRYGDIPLPKGLPRGGWTELDLAQTNYLRELVELPPETSSKVAVEKDRRRMKANQIRRAVKRHSQVSGGRRSGGRNNG.

Positions 3–75 (EKLQKVLARA…ICRVLAYYKP (73 aa)) constitute an S4 RNA-binding domain. The active-site Nucleophile is aspartate 110. A disordered region spans residues 256 to 290 (VEKDRRRMKANQIRRAVKRHSQVSGGRRSGGRNNG).

This sequence belongs to the pseudouridine synthase RsuA family.

The enzyme catalyses uridine(2605) in 23S rRNA = pseudouridine(2605) in 23S rRNA. Functionally, responsible for synthesis of pseudouridine from uracil-2605 in 23S ribosomal RNA. The sequence is that of Ribosomal large subunit pseudouridine synthase B (rluB) from Escherichia coli O157:H7.